The primary structure comprises 187 residues: Elongation factor P (187 aa).

Belongs to the elongation factor P family.

It is found in the cytoplasm. The protein operates within protein biosynthesis; polypeptide chain elongation. Involved in peptide bond synthesis. Stimulates efficient translation and peptide-bond synthesis on native or reconstituted 70S ribosomes in vitro. Probably functions indirectly by altering the affinity of the ribosome for aminoacyl-tRNA, thus increasing their reactivity as acceptors for peptidyl transferase. The chain is Elongation factor P from Synechococcus sp. (strain WH7803).